The sequence spans 301 residues: Radial spoke head 1 homolog (301 aa).

The segment covering 1–20 has biased composition (acidic residues); the sequence is MSDLGSEELEEEGENDLGEY. A disordered region spans residues 1 to 41; the sequence is MSDLGSEELEEEGENDLGEYEGERNEVGERHGHGKARLPNG. MORN repeat units follow at residues 20–43, 44–66, 67–89, 90–112, 113–135, and 159–181; these read YEGE…NGDT, YEGS…NGAR, YTGD…DGSR, YEGE…NNDT, YTGE…ETGS, and YQGK…IGCE. Basic and acidic residues predominate over residues 21-31; that stretch reads EGERNEVGERH. The interval 225–301 is disordered; it reads LSEEQPPPEG…FDEEPSDLQD (77 aa). Positions 249–261 are enriched in acidic residues; sequence PSEDIQAEGFEGE. The span at 262 to 278 shows a compositional bias: basic and acidic residues; sequence LEPRGADEDVDTFRQES. The segment covering 279–290 has biased composition (polar residues); sequence QENSYDIDQGNL. Over residues 292–301 the composition is skewed to acidic residues; that stretch reads FDEEPSDLQD.

Component of the axonemal radial spoke 1 (RS1) and 2 (RS2) complexes, at least composed of spoke head proteins RSPH1, RSPH3, RSPH9 and the cilia-specific component RSPH4A or sperm-specific component RSPH6A, spoke stalk proteins RSPH14, DNAJB13, DYDC1, ROPN1L and NME5, and the RS1 complex-specific anchor protein IQUB. Interacts with RSPH3B. Interacts with RSPH4A. Interacts with RSPH6A. In terms of tissue distribution, expressed in the trachea, ependymal cells, oviduct and ependymal cells (at protein level). Germ cell specific. Specifically expressed in testis, and to a lower extent in ovary. Not expressed in somatic tissues.

It is found in the cytoplasm. The protein resides in the chromosome. It localises to the cytoskeleton. Its subcellular location is the cilium axoneme. The protein localises to the flagellum axoneme. Functionally, functions as part of axonemal radial spoke complexes that play an important part in the motility of sperm and cilia. The sequence is that of Radial spoke head 1 homolog (Rsph1) from Mus musculus (Mouse).